The primary structure comprises 264 residues: Thymidylate synthase (264 aa).

DUMP contacts are provided by residues Arg21 and 126–127 (RR). Cys146 functions as the Nucleophile in the catalytic mechanism. DUMP is bound by residues 166–169 (RSAD), Asn177, and 207–209 (HLY). Residue Asp169 coordinates (6R)-5,10-methylene-5,6,7,8-tetrahydrofolate. A (6R)-5,10-methylene-5,6,7,8-tetrahydrofolate-binding site is contributed by Ala263.

It belongs to the thymidylate synthase family. Bacterial-type ThyA subfamily. Homodimer.

The protein localises to the cytoplasm. The catalysed reaction is dUMP + (6R)-5,10-methylene-5,6,7,8-tetrahydrofolate = 7,8-dihydrofolate + dTMP. It functions in the pathway pyrimidine metabolism; dTTP biosynthesis. Catalyzes the reductive methylation of 2'-deoxyuridine-5'-monophosphate (dUMP) to 2'-deoxythymidine-5'-monophosphate (dTMP) while utilizing 5,10-methylenetetrahydrofolate (mTHF) as the methyl donor and reductant in the reaction, yielding dihydrofolate (DHF) as a by-product. This enzymatic reaction provides an intracellular de novo source of dTMP, an essential precursor for DNA biosynthesis. The protein is Thymidylate synthase of Rhodopseudomonas palustris (strain HaA2).